A 63-amino-acid chain; its full sequence is Small ribosomal subunit protein eS17 (63 aa).

It belongs to the eukaryotic ribosomal protein eS17 family.

The sequence is that of Small ribosomal subunit protein eS17 from Methanococcus maripaludis (strain C7 / ATCC BAA-1331).